Consider the following 364-residue polypeptide: MAQQTPLYEQHTLCGARMVDFHGWMMPLHYGSQLDEHHAVRTDAGMFDVSHMTIVDLHGSRTREFLRYLLANDVAKLTKTGKALYSGMLNASGGVIDDLIIYYFTEDFFRLVVNSATREKDLSWITQHAEPYAIDITVRDDLSLIAVQGPNAQEKAATLFTDEQRHAVEGMKPFFGVQVGDLFIATTGYTGEAGYEIAMPNEKAADFWRALVEAGVKPCGLGARDTLRLEAGMNLYGQEMDEGISPLAANMGWTIAWEPADRDFIGREALEMQREKGHEQLVGLVMTEKGVLRNELPVRFTDAQGNQQEGIITSGTFSPTLGYSIALARVPAGIGETAIVQIRNREMPVKVTKPVFVRNGKAVA.

The protein belongs to the GcvT family. In terms of assembly, the glycine cleavage system is composed of four proteins: P, T, L and H.

It carries out the reaction N(6)-[(R)-S(8)-aminomethyldihydrolipoyl]-L-lysyl-[protein] + (6S)-5,6,7,8-tetrahydrofolate = N(6)-[(R)-dihydrolipoyl]-L-lysyl-[protein] + (6R)-5,10-methylene-5,6,7,8-tetrahydrofolate + NH4(+). The glycine cleavage system catalyzes the degradation of glycine. In Salmonella enteritidis PT4 (strain P125109), this protein is Aminomethyltransferase.